Reading from the N-terminus, the 169-residue chain is Protein pid-1 (169 aa).

The span at 137–151 (SGSPRITPQKHTPVS) shows a compositional bias: polar residues. Residues 137–169 (SGSPRITPQKHTPVSANHKPARSIFDDIPSNIA) form a disordered region.

As to quaternary structure, component of the pid-1 variant of the PETISCO complex (also called the pid-3, erh-2, tofu-6, and ife-3 small RNA complex) containing at least pid-1, tofu-6, ife-3, pid-3, and erh-2, which is required for the biogenesis of a class of 21 nucleotide PIWI-interacting RNAs (piRNAs) that possess a uracil residue at the 5'-end (also called 21U-RNAs). Within the complex interacts with pid-3; the interaction is direct. Within the complex interacts with erh-2. Within the complex interacts with tofu-6. Expressed predominantly in the germline (at protein level).

The protein localises to the cytoplasm. Its subcellular location is the nucleus. The protein resides in the perinuclear region. Its function is as follows. Component of the pid-1 variant of the PETISCO complex which is required for the biogenesis of a class of 21 nucleotide PIWI-interacting RNAs (piRNAs) that possess a uracil residue at the 5'-end (also called 21U-RNAs). Within the complex acts as an adapter which binds to the complex via erh-2. Involved in the biogenesis of 21U-RNAs which guide the piwi protein prg-1 to its DNA targets for silencing. Plays a role in small RNA-directed transgenerational epigenetic inheritance. The chain is Protein pid-1 from Caenorhabditis elegans.